The chain runs to 70 residues: Probable protein transport protein Sec61 subunit gamma (70 aa).

Topologically, residues 1-33 (MADNADDLFQIPKNFYKEGSHFIKRCVKPDRKE) are cytoplasmic. The helical transmembrane segment at 34-62 (FLSISKAVATGFVLMGLIGYIIKLIHIPI) threads the bilayer. At 63–70 (NKVLVGGA) the chain is on the extracellular side.

This sequence belongs to the SecE/SEC61-gamma family. Heterotrimeric complex composed of SEC61-alpha, SEC61-beta and SEC61-gamma.

It localises to the endoplasmic reticulum membrane. Its function is as follows. Necessary for protein translocation in the endoplasmic reticulum. In Schizosaccharomyces pombe (strain 972 / ATCC 24843) (Fission yeast), this protein is Probable protein transport protein Sec61 subunit gamma (sss1).